Consider the following 426-residue polypeptide: Glutamate-1-semialdehyde 2,1-aminomutase (426 aa).

N6-(pyridoxal phosphate)lysine is present on lysine 265.

Belongs to the class-III pyridoxal-phosphate-dependent aminotransferase family. HemL subfamily. In terms of assembly, homodimer. It depends on pyridoxal 5'-phosphate as a cofactor.

The protein resides in the cytoplasm. It carries out the reaction (S)-4-amino-5-oxopentanoate = 5-aminolevulinate. Its pathway is porphyrin-containing compound metabolism; protoporphyrin-IX biosynthesis; 5-aminolevulinate from L-glutamyl-tRNA(Glu): step 2/2. The sequence is that of Glutamate-1-semialdehyde 2,1-aminomutase from Hahella chejuensis (strain KCTC 2396).